Consider the following 471-residue polypeptide: Argininosuccinate lyase (471 aa).

This sequence belongs to the lyase 1 family. Argininosuccinate lyase subfamily.

It is found in the cytoplasm. It catalyses the reaction 2-(N(omega)-L-arginino)succinate = fumarate + L-arginine. It functions in the pathway amino-acid biosynthesis; L-arginine biosynthesis; L-arginine from L-ornithine and carbamoyl phosphate: step 3/3. This chain is Argininosuccinate lyase, found in Deinococcus radiodurans (strain ATCC 13939 / DSM 20539 / JCM 16871 / CCUG 27074 / LMG 4051 / NBRC 15346 / NCIMB 9279 / VKM B-1422 / R1).